The sequence spans 436 residues: Proline--tRNA ligase (436 aa).

Belongs to the class-II aminoacyl-tRNA synthetase family. ProS type 2 subfamily. In terms of assembly, homodimer.

The protein localises to the cytoplasm. It catalyses the reaction tRNA(Pro) + L-proline + ATP = L-prolyl-tRNA(Pro) + AMP + diphosphate. Its function is as follows. Catalyzes the attachment of proline to tRNA(Pro) in a two-step reaction: proline is first activated by ATP to form Pro-AMP and then transferred to the acceptor end of tRNA(Pro). The chain is Proline--tRNA ligase from Neorickettsia sennetsu (strain ATCC VR-367 / Miyayama) (Ehrlichia sennetsu).